The sequence spans 123 residues: MARLMGVDLPREKRMEIALTYIYGIGRTRSKEILEATGVSPDLRSKDLSDDDLTKLRDYIEASEFKVEGDLRREVQADIRRKIEIGCYQGLRHRRGLPVRGQRTKTNARTRKGPKKTVAGKKK.

The segment at 96–123 (GLPVRGQRTKTNARTRKGPKKTVAGKKK) is disordered.

Belongs to the universal ribosomal protein uS13 family. In terms of assembly, part of the 30S ribosomal subunit. Forms a loose heterodimer with protein S19. Forms two bridges to the 50S subunit in the 70S ribosome.

Its function is as follows. Located at the top of the head of the 30S subunit, it contacts several helices of the 16S rRNA. In the 70S ribosome it contacts the 23S rRNA (bridge B1a) and protein L5 of the 50S subunit (bridge B1b), connecting the 2 subunits; these bridges are implicated in subunit movement. Contacts the tRNAs in the A and P-sites. In Nocardia farcinica (strain IFM 10152), this protein is Small ribosomal subunit protein uS13.